The primary structure comprises 119 residues: Beta-2-microglobulin (119 aa).

Positions 1–20 (MARTVATFFLMLVSLACLDA) are cleaved as a signal peptide. The Ig-like C1-type domain occupies 25–114 (PQVQVYTRHP…VTLKEPKVVT (90 aa)). A disulfide bridge links C45 with C100.

The protein belongs to the beta-2-microglobulin family. Heterodimer of an alpha chain and a beta chain. Beta-2-microglobulin is the beta-chain of major histocompatibility complex class I molecules.

It is found in the secreted. Functionally, component of the class I major histocompatibility complex (MHC). Involved in the presentation of peptide antigens to the immune system. This chain is Beta-2-microglobulin (B2M), found in Sigmodon hispidus (Hispid cotton rat).